The primary structure comprises 107 residues: uncharacterized protein (107 aa).

3 helical membrane passes run 20 to 40 (FISLISSSTSELPLFVVEVGI), 49 to 69 (PAILSILVLNALEVSSFISTV), and 86 to 106 (VVMLKILAFLLLEGIIIKLFL).

Its subcellular location is the membrane. This is an uncharacterized protein from Saccharomyces cerevisiae (strain ATCC 204508 / S288c) (Baker's yeast).